A 316-amino-acid polypeptide reads, in one-letter code: BTB/POZ domain-containing protein Y57A10B.3 (316 aa).

An N-terminal signal peptide occupies residues 1–21 (MSAMRRCTCFIICLLTSYTYG). 6 N-linked (GlcNAc...) asparagine glycosylation sites follow: Asn-91, Asn-107, Asn-118, Asn-133, Asn-191, and Asn-260. The region spanning 158–226 (RDAVLIVEGK…VHSTATFPND (69 aa)) is the BTB domain.

The protein resides in the secreted. This chain is BTB/POZ domain-containing protein Y57A10B.3 (btb-14), found in Caenorhabditis elegans.